A 232-amino-acid polypeptide reads, in one-letter code: Pseudaminic acid cytidylyltransferase (232 aa).

Belongs to the CMP-NeuNAc synthase family. Mg(2+) is required as a cofactor.

It catalyses the reaction pseudaminate + CTP = CMP-pseudaminate + diphosphate. Functionally, catalyzes the final step in the biosynthesis of pseudaminic acid, a sialic-acid-like sugar that is used to modify flagellin. Mediates the activation of pseudaminic acid with CMP by forming CMP-pseudaminic acid. This chain is Pseudaminic acid cytidylyltransferase (pseF), found in Campylobacter jejuni subsp. jejuni serotype O:2 (strain ATCC 700819 / NCTC 11168).